Here is a 66-residue protein sequence, read N- to C-terminus: Conotoxin mr5.2 (66 aa).

The first 19 residues, 1-19 (MRCVPVFVILLLLIASAPT), serve as a signal peptide directing secretion. The propeptide occupies 20–48 (VDAQLKTKDDMPLASFHANVKRTLQILRD). Residues glutamate 57 and glutamate 61 each carry the 4-carboxyglutamate modification. Asparagine 65 is subject to Asparagine amide.

In terms of processing, contains 2 disulfide bonds that can be either 'C1-C3, C2-C4' or 'C1-C4, C2-C3', since these disulfide connectivities have been observed for conotoxins with cysteine framework V (for examples, see AC P0DQQ7 and AC P81755). As to expression, expressed by the venom duct.

The protein resides in the secreted. This Conus marmoreus (Marble cone) protein is Conotoxin mr5.2.